Reading from the N-terminus, the 162-residue chain is MKTVTARPLTAEAFAPYGSVADISELENLVSLADAYEGTGEAKTPVLQLVQAKAMSGSPVISQMEIHPFSSQTFLPLDQSSSLIVVCEAGEDGMPDESTIKAFLASPSQIVTYRHGVMHHRLTPLAPSGRFAMTMWQTGRGGDTVLYPLHTPVSVDISDITP.

The protein belongs to the ureidoglycolate lyase family. Homodimer. It depends on Ni(2+) as a cofactor.

It carries out the reaction (S)-ureidoglycolate = urea + glyoxylate. Its pathway is nitrogen metabolism; (S)-allantoin degradation. In terms of biological role, catalyzes the catabolism of the allantoin degradation intermediate (S)-ureidoglycolate, generating urea and glyoxylate. Involved in the utilization of allantoin as nitrogen source. In Agrobacterium fabrum (strain C58 / ATCC 33970) (Agrobacterium tumefaciens (strain C58)), this protein is Putative ureidoglycolate lyase.